Consider the following 341-residue polypeptide: Phenazine O-methyltransferase PhzM (341 aa).

Residues Asp-205 and 231-233 (GDF) each bind S-adenosyl-L-methionine. His-251 functions as the Proton acceptor in the catalytic mechanism.

Belongs to the class I-like SAM-binding methyltransferase superfamily. Cation-independent O-methyltransferase family. As to quaternary structure, homodimer.

It catalyses the reaction 1,6-dihydroxyphenazine + S-adenosyl-L-methionine = 1-hydroxy-6-methoxyphenazine + S-adenosyl-L-homocysteine + H(+). It carries out the reaction 1-hydroxy-6-methoxyphenazine + S-adenosyl-L-methionine = 1,6-dimethoxyphenazine + S-adenosyl-L-homocysteine + H(+). The catalysed reaction is 1-hydroxy-6-methoxyphenazine N(10)-oxide + S-adenosyl-L-methionine = 1,6-dimethoxyphenazine N(5)-oxide + S-adenosyl-L-homocysteine. The enzyme catalyses 1,6-dihydroxyphenazine N(5),N(10)-dioxide + S-adenosyl-L-methionine = 1-hydroxy-6-methoxyphenazine N(5),N(10)-dioxide + S-adenosyl-L-homocysteine. It catalyses the reaction 1-hydroxy-6-methoxyphenazine N(5),N(10)-dioxide + S-adenosyl-L-methionine = 1,6-dimethoxyphenazine N(5),N(10)-dioxide + S-adenosyl-L-homocysteine. Its function is as follows. Involved in the biosynthesis of phenazine natural products including myxin, an N(5),N(10)-dioxide phenazine antiobiotic, which has antimicrobial activity. O-methyltransferase, which converts iodinin (1,6-dihydroxyphenazine N(5),N(10)-dioxide) to myxin (1-hydroxy-6-methoxyphenazine N(5),N(10)-dioxide). Catalyzes both monomethoxy and dimethoxy formation of phenazine natural compounds. Acts on a wide variety of substrates, catalyzing O-methylation of phenazines with non-, mono- or di-N-oxide. Highest activity with 1,6-dihydroxyphenazine (DHP) as substrate. Less active with monohydroxy-containing and monohydroxy-monomethoxy-containing phenazines. Least active with non-phenazine substrates, such as 8-hydroxyquinoline and 6-hydroxyquinoline. Is not able to convert 1-hydroxyphenazine to 1-hydroxy-N5-methylphenazine (pyocyanine), hence does not function as an N-methyltransferase. The polypeptide is Phenazine O-methyltransferase PhzM (Lysobacter antibioticus).